The primary structure comprises 25 residues: Alpha-amylase inhibitor (25 aa).

In terms of assembly, monomer or homodimer. Post-translationally, may exist both in a glycosylated and in an unglycosylated form.

It localises to the secreted. Its function is as follows. Inhibits alpha-amylases but not trypsin. Is more effective against insect alpha-amylases than those of mammals. The protein is Alpha-amylase inhibitor of Secale cereale (Rye).